The primary structure comprises 172 residues: uncharacterized protein (172 aa).

The disordered stretch occupies residues 22–64; it reads RSVSSSPAAKQPAPGTVAQSFPPGELALRDETGGRGRGTRGIR.

This is an uncharacterized protein from Human cytomegalovirus (strain AD169) (HHV-5).